Here is an 855-residue protein sequence, read N- to C-terminus: DNA mismatch repair protein MutS (855 aa).

Residue 616–623 participates in ATP binding; the sequence is GPNMGGKS.

Belongs to the DNA mismatch repair MutS family.

In terms of biological role, this protein is involved in the repair of mismatches in DNA. It is possible that it carries out the mismatch recognition step. This protein has a weak ATPase activity. The sequence is that of DNA mismatch repair protein MutS from Salmonella paratyphi C (strain RKS4594).